The primary structure comprises 674 residues: ATP-dependent DNA helicase Rep (674 aa).

Residues 1–280 (MRLNPGQQHA…IKLEQNYRSS (280 aa)) enclose the UvrD-like helicase ATP-binding domain. Residues 22–29 (AGAGSGKT) and arginine 278 contribute to the ATP site. A UvrD-like helicase C-terminal domain is found at 281–562 (GRILKAANIL…QLMTLHASKG (282 aa)).

Belongs to the helicase family. UvrD subfamily. In terms of assembly, homodimer.

It catalyses the reaction Couples ATP hydrolysis with the unwinding of duplex DNA by translocating in the 3'-5' direction.. The enzyme catalyses ATP + H2O = ADP + phosphate + H(+). Rep helicase is a single-stranded DNA-dependent ATPase involved in DNA replication; it can initiate unwinding at a nick in the DNA. It binds to the single-stranded DNA and acts in a progressive fashion along the DNA in the 3' to 5' direction. The polypeptide is ATP-dependent DNA helicase Rep (Salmonella typhimurium (strain LT2 / SGSC1412 / ATCC 700720)).